A 321-amino-acid polypeptide reads, in one-letter code: UDP-N-acetylenolpyruvoylglucosamine reductase (321 aa).

The 168-residue stretch at 36–203 folds into the FAD-binding PCMH-type domain; it reads FRAGGLAEVM…TGALFEGYPE (168 aa). R183 is a catalytic residue. Residue S232 is the Proton donor of the active site. E302 is an active-site residue.

Belongs to the MurB family. It depends on FAD as a cofactor.

It is found in the cytoplasm. It catalyses the reaction UDP-N-acetyl-alpha-D-muramate + NADP(+) = UDP-N-acetyl-3-O-(1-carboxyvinyl)-alpha-D-glucosamine + NADPH + H(+). The protein operates within cell wall biogenesis; peptidoglycan biosynthesis. Cell wall formation. The sequence is that of UDP-N-acetylenolpyruvoylglucosamine reductase from Agrobacterium fabrum (strain C58 / ATCC 33970) (Agrobacterium tumefaciens (strain C58)).